A 238-amino-acid polypeptide reads, in one-letter code: Transcriptional repressor ThaA (238 aa).

The region spanning 169 to 234 (IPGEIARVSL…HAAVKATLVG (66 aa)) is the HTH luxR-type domain. The segment at residues 193–212 (VSEISSILQMSVRNINFHIQ) is a DNA-binding region (H-T-H motif).

This sequence belongs to the autoinducer-regulated transcriptional regulatory protein family.

Functionally, represses thailandamide production. The polypeptide is Transcriptional repressor ThaA (Burkholderia thailandensis (strain ATCC 700388 / DSM 13276 / CCUG 48851 / CIP 106301 / E264)).